The following is a 954-amino-acid chain: cGMP-specific 3',5'-cyclic phosphodiesterase alpha (954 aa).

Topologically, residues 1–259 (MMDTKVDQTI…NTFYSSFPFK (259 aa)) are cytoplasmic. The chain crosses the membrane as a helical span at residues 260–280 (LFLHSLYMIFICFIYFVVLYF). The Extracellular portion of the chain corresponds to 281 to 296 (MLLKKIYTHPFIFHLS). Residues 297-317 (VLKFLFDIIFFLSFILYPLFL) form a helical membrane-spanning segment. Topologically, residues 318 to 327 (RLKRIDKIIY) are cytoplasmic. The chain crosses the membrane as a helical span at residues 328-348 (SSYISSYIFVCVTFLYSFIIF). Over 349 to 365 (KCSSYSVKMNSNTYQNN) the chain is Extracellular. Residues 366–386 (FVFQNMLFLLINIIYICIFCF) traverse the membrane as a helical segment. The Cytoplasmic portion of the chain corresponds to 387-401 (LKNYMILYSFLYNCR). The helical transmembrane segment at 402–422 (FSIFCILFIFLYYYLFFSLDF) threads the bilayer. The Extracellular segment spans residues 423 to 432 (YRIIHLPLDN). The chain crosses the membrane as a helical span at residues 433 to 453 (FFFPFLCFLFFSFLFIFKIIM). Topologically, residues 454-954 (SLYYEYVYEK…LSKLELIKFE (501 aa)) are cytoplasmic. The PDEase domain occupies 586–930 (NQEETKSFLS…ERWESHKNDN (345 aa)). The active-site Proton donor is His-680. 680-684 (HTSLH) provides a ligand contact to 3',5'-cyclic GMP. Positions 684, 720, 721, and 832 each coordinate Zn(2+). 3',5'-cyclic GMP is bound by residues Asp-721, Asp-832, and Gln-884. Asp-721 is a Mg(2+) binding site.

This sequence belongs to the cyclic nucleotide phosphodiesterase family. Zn(2+) is required as a cofactor. The cofactor is Mg(2+).

The protein resides in the membrane. The enzyme catalyses 3',5'-cyclic GMP + H2O = GMP + H(+). The protein operates within purine metabolism; 3',5'-cyclic GMP degradation; GMP from 3',5'-cyclic GMP: step 1/1. Its activity is regulated as follows. Not inhibited by cAMP. Inhibited by zaprinast. Specifically hydrolyzes the second messenger cGMP, which is a key regulator of many important physiological processes. In Plasmodium falciparum (isolate 3D7), this protein is cGMP-specific 3',5'-cyclic phosphodiesterase alpha.